The following is a 290-amino-acid chain: Elongation factor Ts (290 aa).

An involved in Mg(2+) ion dislocation from EF-Tu region spans residues 83 to 86 (TDFV).

This sequence belongs to the EF-Ts family.

It localises to the cytoplasm. Its function is as follows. Associates with the EF-Tu.GDP complex and induces the exchange of GDP to GTP. It remains bound to the aminoacyl-tRNA.EF-Tu.GTP complex up to the GTP hydrolysis stage on the ribosome. The protein is Elongation factor Ts (tsf) of Aquifex aeolicus (strain VF5).